The sequence spans 139 residues: Protein GOS9 (139 aa).

In terms of domain architecture, Jacalin-type lectin spans 5–139; it reads LVKIGTWGGN…VDSIGVYVHI (135 aa).

In terms of tissue distribution, expressed mainly in roots.

In Oryza sativa subsp. indica (Rice), this protein is Protein GOS9 (GOS9).